The chain runs to 356 residues: Histidinol-phosphate aminotransferase (356 aa).

The residue at position 208 (Lys208) is an N6-(pyridoxal phosphate)lysine.

The protein belongs to the class-II pyridoxal-phosphate-dependent aminotransferase family. Histidinol-phosphate aminotransferase subfamily. In terms of assembly, homodimer. It depends on pyridoxal 5'-phosphate as a cofactor.

It catalyses the reaction L-histidinol phosphate + 2-oxoglutarate = 3-(imidazol-4-yl)-2-oxopropyl phosphate + L-glutamate. It functions in the pathway amino-acid biosynthesis; L-histidine biosynthesis; L-histidine from 5-phospho-alpha-D-ribose 1-diphosphate: step 7/9. The chain is Histidinol-phosphate aminotransferase from Lactococcus lactis subsp. cremoris (strain MG1363).